The primary structure comprises 1854 residues: PKS-NRPS hybrid synthetase ATPKS (1854 aa).

The interval 24-423 is adenylation (A) domain; the sequence is FDQTQTRYSP…GRADTQIKIR (400 aa). Residues 523–598 enclose the Carrier 1 domain; sequence IPASTLTQQL…NLAAYLSDQT (76 aa). Serine 558 carries the O-(pantetheine 4'-phosphoryl)serine modification. Residues 617–1049 form the Ketosynthase family 3 (KS3) domain; sequence GEDIAVISMA…GTNAHAIIEE (433 aa). Residues cysteine 791, histidine 926, and histidine 967 each act as for beta-ketoacyl synthase activity in the active site. Residues 1162–1496 form a malonyl-CoA:ACP transacylase (MAT) domain region; sequence LFSGQGTERA…SLSDLHIRKV (335 aa). A disordered region spans residues 1536–1556; the sequence is KSSGQPSGQSPSGCPQPTGQI. Residues 1537 to 1555 show a composition bias toward low complexity; the sequence is SSGQPSGQSPSGCPQPTGQ. One can recognise a Carrier 2 domain in the interval 1776-1851; sequence MMLQGLVRGI…SLSDALQKQV (76 aa). Serine 1811 is subject to O-(pantetheine 4'-phosphoryl)serine.

It in the C-terminal section; belongs to the NRP synthetase family.

It functions in the pathway secondary metabolite biosynthesis. In terms of biological role, PKS-NRPS hybrid synthetase; part of the gene cluster that mediates the biosynthesis of pyrophen and campyrone B, which represent a class of fungal amino acid-derived alpha-pyrone natural products. The first step of pyrophen biosynthesis is catalyzed by the PKS-NRPS hybrid synthetase ATPKS that uptakes and condensates L-phenylalanine and malonyl-CoA in order to produce desmethyldesacetylpyrophen. Although the A domain does not discriminate between 2 enantiomeric phenylalanines, the downstream KS domain must play a gate keeping role to stereoselectively accept the L-phenylalanyl-S-phosphopantetheine (Ppant)-T domain intermediate for chain elongation. The resulting amino acid derived diketide is off-loaded through lactonization to yield the alpha-pyrone intermediate desmethyldesacetylpyrophen. The cluster-specific O-methyltransferase (OMT) then methylates desmethyldesacetylpyrophen to desacetylpyrophen, which is further acetylated to pyrophen by an endogenous yet unidentified N-acetyltransferase. ATPKS has relaxed substrate specificity to activate and extend branched-chain amino acid L-leucine to produce small amounts of campyrone B. This Aspergillus niger (strain ATCC 1015 / CBS 113.46 / FGSC A1144 / LSHB Ac4 / NCTC 3858a / NRRL 328 / USDA 3528.7) protein is PKS-NRPS hybrid synthetase ATPKS.